Reading from the N-terminus, the 583-residue chain is PTS system lactose-specific EIICB component (583 aa).

Positions 8–409 constitute a PTS EIIC type-3 domain; it reads IEKGKPFFEK…VVDVMIYYPF (402 aa). The next 9 helical transmembrane spans lie at 30-50, 64-84, 103-123, 137-157, 176-196, 222-242, 283-303, 339-359, and 381-401; these read GFIAAIPIILFSSIFILITYV, GILMKPYNYTMGIVGLIVAGT, INFISTMMAAMSGFLFLAADP, KGLLTAFISAFITVIVYNFFI, VFKDIFPLSAVIIIIYALDLL, GWIGVTLIFGAFAFFWFVGIH, FVATMGGTGATLVVPFMFMWL, VFFIPFIFAPIVNVWIFKFFV, and IVMGTGFAFWSFVLAIVLIVV. The span at 453–462 shows a compositional bias: low complexity; that stretch reads ANETTTTESA. Residues 453-475 form a disordered region; it reads ANETTTTESAPSDEEVSAKNSSN. Positions 480–583 constitute a PTS EIIB type-3 domain; it reads QTNVLVLCAG…LDFVQQQFEK (104 aa). C487 (phosphocysteine intermediate; for EIIB activity) is an active-site residue. C487 is subject to Phosphocysteine; by EIIA.

It localises to the cell membrane. The catalysed reaction is lactose(out) + N(pros)-phospho-L-histidyl-[protein] = lactose 6-phosphate(in) + L-histidyl-[protein]. The phosphoenolpyruvate-dependent sugar phosphotransferase system (sugar PTS), a major carbohydrate active transport system, catalyzes the phosphorylation of incoming sugar substrates concomitantly with their translocation across the cell membrane. The enzyme II LacEF PTS system is involved in lactose transport. The polypeptide is PTS system lactose-specific EIICB component (Staphylococcus haemolyticus (strain JCSC1435)).